A 266-amino-acid chain; its full sequence is Non-structural maintenance of chromosomes element 1 homolog (266 aa).

Positions 1–102 are interaction with NSMCE3; it reads MQGNTRRTGV…SVSKMASDFA (102 aa). The RING-type; atypical zinc-finger motif lies at 191-232; it reads CNICRSLLIQGQSCETCGIRMHLPCVAKYFQSSSEPHCPHCN. Residues 243-252 are compositionally biased toward basic and acidic residues; sequence FDPEKERETG. The interval 243 to 266 is disordered; that stretch reads FDPEKERETGMSRSNKRPSRSRQH. Residues 256 to 266 are compositionally biased toward basic residues; it reads SNKRPSRSRQH.

Belongs to the NSE1 family. In terms of assembly, component of the SMC5-SMC6 complex which consists at least of SMC5, SMC6, NSMCE2, NSMCE1, NSMCE4A or EID3 and NSMCE3. NSMCE1, NSMCE4A or EID3 and NSMCE3 probably form a subcomplex that bridges the head domains of the SMC5-SMC6 heterodimer. Interacts with NSMCE3. Post-translationally, ubiquitinated.

It localises to the nucleus. It is found in the chromosome. Its subcellular location is the telomere. The enzyme catalyses S-ubiquitinyl-[E2 ubiquitin-conjugating enzyme]-L-cysteine + [acceptor protein]-L-lysine = [E2 ubiquitin-conjugating enzyme]-L-cysteine + N(6)-ubiquitinyl-[acceptor protein]-L-lysine.. RING-type zinc finger-containing E3 ubiquitin ligase that assembles with melanoma antigen protein (MAGE) to catalyze the direct transfer of ubiquitin from E2 ubiquitin-conjugating enzyme to a specific substrate. Within MAGE-RING ubiquitin ligase complex, MAGE stimulates and specifies ubiquitin ligase activity likely through recruitment and/or stabilization of the E2 ubiquitin-conjugating enzyme at the E3:substrate complex. Involved in maintenance of genome integrity, DNA damage response and DNA repair. NSMCE3/MAGEG1 and NSMCE1 ubiquitin ligase are components of SMC5-SMC6 complex and may positively regulate homologous recombination-mediated DNA repair. The chain is Non-structural maintenance of chromosomes element 1 homolog (NSMCE1) from Bos taurus (Bovine).